The sequence spans 145 residues: Large ribosomal subunit protein bL19 (145 aa).

Basic and acidic residues predominate over residues 114 to 136 (IAEKMESPAAKATREAAKKEAKA). The tract at residues 114–145 (IAEKMESPAAKATREAAKKEAKAAKKNAAPAE) is disordered.

Belongs to the bacterial ribosomal protein bL19 family.

This protein is located at the 30S-50S ribosomal subunit interface and may play a role in the structure and function of the aminoacyl-tRNA binding site. The polypeptide is Large ribosomal subunit protein bL19 (Methylocella silvestris (strain DSM 15510 / CIP 108128 / LMG 27833 / NCIMB 13906 / BL2)).